Reading from the N-terminus, the 484-residue chain is Phosphomethylpyrimidine synthase (484 aa).

Substrate is bound by residues Asn-97, Met-126, Tyr-156, His-192, 212-214, 253-256, and Glu-292; these read SRG and DSLR. His-296 is a Zn(2+) binding site. Tyr-319 contributes to the substrate binding site. His-360 serves as a coordination point for Zn(2+). 3 residues coordinate [4Fe-4S] cluster: Cys-440, Cys-443, and Cys-448.

The protein belongs to the ThiC family. Requires [4Fe-4S] cluster as cofactor.

The enzyme catalyses 5-amino-1-(5-phospho-beta-D-ribosyl)imidazole + S-adenosyl-L-methionine = 4-amino-2-methyl-5-(phosphooxymethyl)pyrimidine + CO + 5'-deoxyadenosine + formate + L-methionine + 3 H(+). Its pathway is cofactor biosynthesis; thiamine diphosphate biosynthesis. Catalyzes the synthesis of the hydroxymethylpyrimidine phosphate (HMP-P) moiety of thiamine from aminoimidazole ribotide (AIR) in a radical S-adenosyl-L-methionine (SAM)-dependent reaction. The protein is Phosphomethylpyrimidine synthase of Synechococcus sp. (strain CC9605).